The primary structure comprises 302 residues: Aspartate carbamoyltransferase catalytic subunit (302 aa).

Residues R53 and T54 each coordinate carbamoyl phosphate. K82 lines the L-aspartate pocket. R103, H131, and Q134 together coordinate carbamoyl phosphate. 2 residues coordinate L-aspartate: R164 and R223. Carbamoyl phosphate contacts are provided by L260 and P261.

It belongs to the aspartate/ornithine carbamoyltransferase superfamily. ATCase family. Heterooligomer of catalytic and regulatory chains.

The catalysed reaction is carbamoyl phosphate + L-aspartate = N-carbamoyl-L-aspartate + phosphate + H(+). The protein operates within pyrimidine metabolism; UMP biosynthesis via de novo pathway; (S)-dihydroorotate from bicarbonate: step 2/3. Its function is as follows. Catalyzes the condensation of carbamoyl phosphate and aspartate to form carbamoyl aspartate and inorganic phosphate, the committed step in the de novo pyrimidine nucleotide biosynthesis pathway. This Methanococcus maripaludis (strain C7 / ATCC BAA-1331) protein is Aspartate carbamoyltransferase catalytic subunit.